The chain runs to 235 residues: Carboxymethylenebutenolidase 2 (235 aa).

Active-site residues include C117, D173, and H204.

It belongs to the dienelactone hydrolase family. Monomer.

It carries out the reaction 2-(5-oxo-2,5-dihydrofuran-2-ylidene)acetate + H2O = 4-oxohex-2-enedioate + H(+). The protein operates within aromatic compound metabolism; 3-chlorocatechol degradation. Ring cleavage of cyclic ester dienelactone to produce maleylacetate. The polypeptide is Carboxymethylenebutenolidase 2 (tfdEII) (Cupriavidus pinatubonensis (strain JMP 134 / LMG 1197) (Cupriavidus necator (strain JMP 134))).